A 465-amino-acid polypeptide reads, in one-letter code: Methionine aminopeptidase 2-2 (465 aa).

Residues 1 to 13 (MGSKTPNDHRRGP) are compositionally biased toward basic and acidic residues. Residues 1 to 92 (MGSKTPNDHR…KKKTLLGGLQ (92 aa)) are disordered. The segment covering 44–55 (GETEDGEDEDDD) has biased composition (acidic residues). Basic residues predominate over residues 71–86 (TKKKNKRKKNKKKKKT). Residue His217 coordinates substrate. 3 residues coordinate a divalent metal cation: Asp238, Asp249, and His318. His326 contributes to the substrate binding site. A divalent metal cation is bound by residues Glu351 and Glu446.

The protein belongs to the peptidase M24A family. Methionine aminopeptidase eukaryotic type 2 subfamily. Co(2+) is required as a cofactor. It depends on Zn(2+) as a cofactor. The cofactor is Mn(2+). Fe(2+) serves as cofactor.

The protein resides in the cytoplasm. It catalyses the reaction Release of N-terminal amino acids, preferentially methionine, from peptides and arylamides.. Its function is as follows. Cotranslationally removes the N-terminal methionine from nascent proteins. The N-terminal methionine is often cleaved when the second residue in the primary sequence is small and uncharged (Met-Ala-, Cys, Gly, Pro, Ser, Thr, or Val). In Blastomyces gilchristii (strain SLH14081) (Blastomyces dermatitidis), this protein is Methionine aminopeptidase 2-2.